Consider the following 434-residue polypeptide: Serine--tRNA ligase (434 aa).

239–241 lines the L-serine pocket; it reads TAE. 270–272 contacts ATP; that stretch reads RSE. An L-serine-binding site is contributed by Glu293. Residue 357-360 participates in ATP binding; that stretch reads EISS. Position 393 (Ser393) interacts with L-serine.

Belongs to the class-II aminoacyl-tRNA synthetase family. Type-1 seryl-tRNA synthetase subfamily. As to quaternary structure, homodimer. The tRNA molecule binds across the dimer.

The protein resides in the cytoplasm. It catalyses the reaction tRNA(Ser) + L-serine + ATP = L-seryl-tRNA(Ser) + AMP + diphosphate + H(+). The enzyme catalyses tRNA(Sec) + L-serine + ATP = L-seryl-tRNA(Sec) + AMP + diphosphate + H(+). The protein operates within aminoacyl-tRNA biosynthesis; selenocysteinyl-tRNA(Sec) biosynthesis; L-seryl-tRNA(Sec) from L-serine and tRNA(Sec): step 1/1. In terms of biological role, catalyzes the attachment of serine to tRNA(Ser). Is also able to aminoacylate tRNA(Sec) with serine, to form the misacylated tRNA L-seryl-tRNA(Sec), which will be further converted into selenocysteinyl-tRNA(Sec). The protein is Serine--tRNA ligase of Pseudoalteromonas translucida (strain TAC 125).